Here is a 256-residue protein sequence, read N- to C-terminus: Acetyl-coenzyme A carboxylase carboxyl transferase subunit alpha (256 aa).

Positions 1 to 236 constitute a CoA carboxyltransferase C-terminal domain; that stretch reads MTDVARILKE…KEHLKTEINQ (236 aa).

This sequence belongs to the AccA family. As to quaternary structure, acetyl-CoA carboxylase is a heterohexamer composed of biotin carboxyl carrier protein (AccB), biotin carboxylase (AccC) and two subunits each of ACCase subunit alpha (AccA) and ACCase subunit beta (AccD).

It localises to the cytoplasm. It catalyses the reaction N(6)-carboxybiotinyl-L-lysyl-[protein] + acetyl-CoA = N(6)-biotinyl-L-lysyl-[protein] + malonyl-CoA. It functions in the pathway lipid metabolism; malonyl-CoA biosynthesis; malonyl-CoA from acetyl-CoA: step 1/1. Its function is as follows. Component of the acetyl coenzyme A carboxylase (ACC) complex. First, biotin carboxylase catalyzes the carboxylation of biotin on its carrier protein (BCCP) and then the CO(2) group is transferred by the carboxyltransferase to acetyl-CoA to form malonyl-CoA. In Streptococcus uberis (strain ATCC BAA-854 / 0140J), this protein is Acetyl-coenzyme A carboxylase carboxyl transferase subunit alpha.